Here is a 108-residue protein sequence, read N- to C-terminus: MSVPRARLLQLVKARCELFSTTFNPEGIRTGNKILRQRLKGPALATYYPRKNVGIRELQKEFGTLGLEVDDEVDDDRLEHLAALRARDKGAPKKKRTAPSAADAKKKK.

Residues leucine 84–lysine 108 form a disordered region.

Belongs to the mitochondrion-specific ribosomal protein mS33 family. As to quaternary structure, component of the mitochondrial small ribosomal subunit (mt-SSU). Mature N.crassa 74S mitochondrial ribosomes consist of a small (37S) and a large (54S) subunit. The 37S small subunit contains a 16S ribosomal RNA (16S mt-rRNA) and 32 different proteins. The 54S large subunit contains a 23S rRNA (23S mt-rRNA) and 42 different proteins.

The protein resides in the mitochondrion. Its function is as follows. Component of the mitochondrial ribosome (mitoribosome), a dedicated translation machinery responsible for the synthesis of mitochondrial genome-encoded proteins, including at least some of the essential transmembrane subunits of the mitochondrial respiratory chain. The mitoribosomes are attached to the mitochondrial inner membrane and translation products are cotranslationally integrated into the membrane. This is Small ribosomal subunit protein mS33 (rsm27) from Neurospora crassa (strain ATCC 24698 / 74-OR23-1A / CBS 708.71 / DSM 1257 / FGSC 987).